The following is a 26-amino-acid chain: Photosystem II stability/assembly factor HCF136, chloroplastic (26 aa).

The protein belongs to the Ycf48 family.

It localises to the plastid. It is found in the chloroplast thylakoid lumen. Essential for photosystem II (PSII) biogenesis; required for assembly of an early intermediate in PSII assembly that includes D2 (psbD) and cytochrome b559. The chain is Photosystem II stability/assembly factor HCF136, chloroplastic from Populus euphratica (Euphrates poplar).